We begin with the raw amino-acid sequence, 161 residues long: Large ribosomal subunit protein uL10 (161 aa).

This sequence belongs to the universal ribosomal protein uL10 family. In terms of assembly, part of the ribosomal stalk of the 50S ribosomal subunit. The N-terminus interacts with L11 and the large rRNA to form the base of the stalk. The C-terminus forms an elongated spine to which L12 dimers bind in a sequential fashion forming a multimeric L10(L12)X complex.

Forms part of the ribosomal stalk, playing a central role in the interaction of the ribosome with GTP-bound translation factors. The sequence is that of Large ribosomal subunit protein uL10 (rplJ) from Mycoplasma pneumoniae (strain ATCC 29342 / M129 / Subtype 1) (Mycoplasmoides pneumoniae).